The sequence spans 327 residues: 2-keto-3-deoxygluconate permease (327 aa).

The next 10 helical transmembrane spans lie at 10-30 (IPGGMMLVPLFLGALCHTFSP), 42-62 (GMITGTVPILAVWFFCMGASI), 73-93 (KSGTLVVTKIAVAWVVAAIAS), 95-115 (IIPEHGVEVGFFAGLSTLALV), 139-159 (AGAFVLMSLESGPLMTMIILG), 163-183 (IASFEPHVFVGAVLPFLVGFA), 199-219 (VQTLIPFFAFALGNTIDLTVI), 224-244 (LLGILLGVAVIIVTGIPLIIA), 254-274 (TAGIAASSSAGAAVATPVLIA), and 289-309 (SLVATAVIVTSILVPILTSIW).

The protein belongs to the KdgT transporter family.

Its subcellular location is the cell inner membrane. It catalyses the reaction 2-dehydro-3-deoxy-D-gluconate(in) + H(+)(in) = 2-dehydro-3-deoxy-D-gluconate(out) + H(+)(out). Its function is as follows. Catalyzes the proton-dependent uptake of 2-keto-3-deoxygluconate (KDG) into the cell. In Escherichia coli O157:H7, this protein is 2-keto-3-deoxygluconate permease.